The chain runs to 174 residues: Probable calcium-binding protein CML20 (174 aa).

Gly2 carries N-myristoyl glycine lipidation. The interval 14 to 35 (LRRSRSRSPPPAVLDPSQSPLS) is disordered. EF-hand domains lie at 39–74 (EAEP…SVDE), 75–100 (AEEM…AVME), 102–137 (GGLD…LNLD), and 141–174 (LTAE…SKQA). Residues Asp52, Asp54, Asp56, Glu63, Asp83, Asp85, Asp87, Glu94, Asp115, Asp117, Asn119, Glu126, Asp154, Asp156, Asp158, and Glu165 each contribute to the Ca(2+) site.

In terms of biological role, potential calcium sensor. This Oryza sativa subsp. japonica (Rice) protein is Probable calcium-binding protein CML20 (CML20).